The sequence spans 313 residues: tRNA(Ile)-lysidine synthase (313 aa).

Position 37–42 (37–42) interacts with ATP; sequence SGGPDS.

Belongs to the tRNA(Ile)-lysidine synthase family.

The protein resides in the cytoplasm. It catalyses the reaction cytidine(34) in tRNA(Ile2) + L-lysine + ATP = lysidine(34) in tRNA(Ile2) + AMP + diphosphate + H(+). Functionally, ligates lysine onto the cytidine present at position 34 of the AUA codon-specific tRNA(Ile) that contains the anticodon CAU, in an ATP-dependent manner. Cytidine is converted to lysidine, thus changing the amino acid specificity of the tRNA from methionine to isoleucine. In Corynebacterium efficiens (strain DSM 44549 / YS-314 / AJ 12310 / JCM 11189 / NBRC 100395), this protein is tRNA(Ile)-lysidine synthase.